Reading from the N-terminus, the 759-residue chain is Subtilisin-like protease SBT3.16 (759 aa).

Residues 1 to 33 form the signal peptide; sequence MELSSLIVPNNKKHFVVVFIGLVLIFKIALITA. A propeptide spans 34–119 (activation peptide); the sequence is ANEKSQIYTV…VTRSKNMKLK (86 aa). In terms of domain architecture, Inhibitor I9 spans 41-118; that stretch reads YTVHLGERQH…RVTRSKNMKL (78 aa). In terms of domain architecture, Peptidase S8 spans 124–608; it reads SDYLGLTSAA…GGLVNPVKVA (485 aa). Residue Asp-153 is the Charge relay system of the active site. Residues Asn-186 and Asn-209 are each glycosylated (N-linked (GlcNAc...) asparagine). His-229 functions as the Charge relay system in the catalytic mechanism. The N-linked (GlcNAc...) asparagine glycan is linked to Asn-371. Ser-539 serves as the catalytic Charge relay system. 2 N-linked (GlcNAc...) asparagine glycosylation sites follow: Asn-632 and Asn-711.

The protein belongs to the peptidase S8 family.

The protein localises to the secreted. In Arabidopsis thaliana (Mouse-ear cress), this protein is Subtilisin-like protease SBT3.16.